We begin with the raw amino-acid sequence, 215 residues long: Cytochrome b6 (215 aa).

Residues 32-52 form a helical membrane-spanning segment; that stretch reads IFYCLGGITLTCFLIQFATGF. C35 contributes to the heme c binding site. Positions 86 and 100 each coordinate heme b. 3 helical membrane-spanning segments follow: residues 90–110, 116–136, and 186–206; these read ASMM…TGGF, LTWV…VTGY, and LHTF…FLMI. Heme b-binding residues include H187 and H202.

It belongs to the cytochrome b family. PetB subfamily. In terms of assembly, the 4 large subunits of the cytochrome b6-f complex are cytochrome b6, subunit IV (17 kDa polypeptide, PetD), cytochrome f and the Rieske protein, while the 4 small subunits are PetG, PetL, PetM and PetN. The complex functions as a dimer. Heme b is required as a cofactor. The cofactor is heme c.

The protein localises to the cellular thylakoid membrane. Functionally, component of the cytochrome b6-f complex, which mediates electron transfer between photosystem II (PSII) and photosystem I (PSI), cyclic electron flow around PSI, and state transitions. This Synechococcus elongatus protein is Cytochrome b6.